The sequence spans 173 residues: Calcineurin subunit B (173 aa).

EF-hand domains lie at 20 to 55 (DEID…AANP), 59 to 87 (RLMD…FSTK), 89 to 124 (NKKE…MVGN), and 130 to 165 (QLQQ…TNVY). Residues Asp-33, Asp-35, Ser-37, Glu-44, Asp-65, Asn-67, Ser-69, Asp-71, Glu-76, Asp-102, Asp-104, Asp-106, Tyr-108, Glu-113, Asp-143, Asp-145, Asp-147, Lys-149, and Glu-154 each contribute to the Ca(2+) site.

It belongs to the calcineurin regulatory subunit family. In terms of assembly, composed of a catalytic subunit (A) and a regulatory subunit (B).

Functionally, regulatory subunit of calcineurin, a calcium-dependent, calmodulin stimulated protein phosphatase. Confers calcium sensitivity. The protein is Calcineurin subunit B (CNB1) of Yarrowia lipolytica (strain CLIB 122 / E 150) (Yeast).